A 399-amino-acid chain; its full sequence is Carbamoyl phosphate synthase arginine-specific small chain (399 aa).

The Glutamine amidotransferase type-1 domain occupies 187–379 (DVALVDCGVK…VERMRCYRKL (193 aa)). Catalysis depends on Cys267, which acts as the Nucleophile. Catalysis depends on residues His352 and Glu354.

This sequence belongs to the CarA family. In terms of assembly, heterodimer composed of 2 chains; the small (or glutamine) chain promotes the hydrolysis of glutamine to ammonia, which is used by the large (or ammonia) chain to synthesize carbamoyl phosphate.

Its subcellular location is the cytoplasm. It catalyses the reaction hydrogencarbonate + L-glutamine + 2 ATP + H2O = carbamoyl phosphate + L-glutamate + 2 ADP + phosphate + 2 H(+). It carries out the reaction L-glutamine + H2O = L-glutamate + NH4(+). The protein operates within amino-acid biosynthesis; L-arginine biosynthesis; carbamoyl phosphate from bicarbonate: step 1/1. Its function is as follows. Small subunit of the arginine-specific carbamoyl phosphate synthase (CPSase). CPSase catalyzes the formation of carbamoyl phosphate from the ammonia moiety of glutamine, carbonate, and phosphate donated by ATP, constituting the first step of 2 biosynthetic pathways, one leading to arginine and/or urea and the other to pyrimidine nucleotides. The small subunit (glutamine amidotransferase) binds and cleaves glutamine to supply the large subunit with the substrate ammonia. In Eremothecium gossypii (strain ATCC 10895 / CBS 109.51 / FGSC 9923 / NRRL Y-1056) (Yeast), this protein is Carbamoyl phosphate synthase arginine-specific small chain (CPA1).